We begin with the raw amino-acid sequence, 321 residues long: MTILLNSSLQRATFFLTGFQGLEGLHGWISIPFCFIYLTVILGNLTILHVICTDATLHGPMYYFLGMLAVTDLGLCLSTLPTVLGIFWFDTREIGIPACFTQLFFIHTLSSMESSVLLSMSIDRYVAVCNPLHDSTVLTPACIVKMGLSSVLRSALLILPLPFLLKRFQYCHSHVLAHAYCLHLEIMKLACSSIIVNHIYGLFVVACTVGVDSLLIFLSYALILRTVLSIASHQERLRALNTCVSHICAVLLFYIPMIGLSLVHRFGEHLPRVVHLFMSYVYLLVPPLMNPIIYSIKTKQIRQRIIKKFQFIKSLRCFWKD.

At 1 to 27 (MTILLNSSLQRATFFLTGFQGLEGLHG) the chain is on the extracellular side. The N-linked (GlcNAc...) asparagine glycan is linked to Asn-6. The chain crosses the membrane as a helical span at residues 28 to 48 (WISIPFCFIYLTVILGNLTIL). The Cytoplasmic segment spans residues 49–56 (HVICTDAT). The chain crosses the membrane as a helical span at residues 57–77 (LHGPMYYFLGMLAVTDLGLCL). Over 78 to 101 (STLPTVLGIFWFDTREIGIPACFT) the chain is Extracellular. Cys-99 and Cys-191 are disulfide-bonded. Residues 102-122 (QLFFIHTLSSMESSVLLSMSI) traverse the membrane as a helical segment. Over 123-141 (DRYVAVCNPLHDSTVLTPA) the chain is Cytoplasmic. The helical transmembrane segment at 142-162 (CIVKMGLSSVLRSALLILPLP) threads the bilayer. At 163-198 (FLLKRFQYCHSHVLAHAYCLHLEIMKLACSSIIVNH) the chain is on the extracellular side. A helical membrane pass occupies residues 199–219 (IYGLFVVACTVGVDSLLIFLS). Residues 220–239 (YALILRTVLSIASHQERLRA) lie on the Cytoplasmic side of the membrane. Residues 240 to 260 (LNTCVSHICAVLLFYIPMIGL) traverse the membrane as a helical segment. Residues 261–275 (SLVHRFGEHLPRVVH) lie on the Extracellular side of the membrane. A helical membrane pass occupies residues 276 to 296 (LFMSYVYLLVPPLMNPIIYSI). Over 297–321 (KTKQIRQRIIKKFQFIKSLRCFWKD) the chain is Cytoplasmic.

The protein belongs to the G-protein coupled receptor 1 family.

It localises to the cell membrane. Its function is as follows. Odorant receptor. This Homo sapiens (Human) protein is Olfactory receptor 51G1 (OR51G1).